The sequence spans 404 residues: uncharacterized protein (404 aa).

Transmembrane regions (helical) follow at residues 1–21 (MNVL…FLFS), 32–52 (VIVG…WEAG), 89–109 (AFAL…AVLY), 182–202 (LFGY…SFMA), 261–281 (LAFV…FGLF), 285–305 (GVTL…LIGV), 344–364 (ATII…AIML), and 384–404 (KAVL…GMFI).

It belongs to the concentrative nucleoside transporter (CNT) (TC 2.A.41) family.

It is found in the cell membrane. This is an uncharacterized protein from Bacillus subtilis (strain 168).